We begin with the raw amino-acid sequence, 142 residues long: HTH-type transcriptional regulator MntR (142 aa).

Residues 1–63 form the HTH dtxR-type domain; that stretch reads MPTPSMEDYI…YEKYRGLVLT (63 aa). The Mn(2+) site is built by aspartate 8, glutamate 11, histidine 77, glutamate 99, glutamate 102, and histidine 103.

Belongs to the DtxR/MntR family. In terms of assembly, homodimer.

Its subcellular location is the cytoplasm. With respect to regulation, DNA binding is strongly activated by Mn(2+). Central regulator of manganese homeostasis. This Bacillus cereus (strain B4264) protein is HTH-type transcriptional regulator MntR.